The chain runs to 176 residues: Cytochrome b (176 aa).

3 helical membrane passes run 33–53 (FGSL…FLAM), 77–98 (WLLR…YLHI), and 113–133 (WNVG…GYVL). Heme b-binding residues include H83 and H97.

The protein belongs to the cytochrome b family. The cytochrome bc1 complex contains 11 subunits: 3 respiratory subunits (MT-CYB, CYC1 and UQCRFS1), 2 core proteins (UQCRC1 and UQCRC2) and 6 low-molecular weight proteins (UQCRH/QCR6, UQCRB/QCR7, UQCRQ/QCR8, UQCR10/QCR9, UQCR11/QCR10 and a cleavage product of UQCRFS1). This cytochrome bc1 complex then forms a dimer. Requires heme b as cofactor.

The protein resides in the mitochondrion inner membrane. Its function is as follows. Component of the ubiquinol-cytochrome c reductase complex (complex III or cytochrome b-c1 complex) that is part of the mitochondrial respiratory chain. The b-c1 complex mediates electron transfer from ubiquinol to cytochrome c. Contributes to the generation of a proton gradient across the mitochondrial membrane that is then used for ATP synthesis. The polypeptide is Cytochrome b (MT-CYB) (Nyctinomops aurispinosus (Peale's free-tailed bat)).